Consider the following 205-residue polypeptide: Riboflavin kinase (205 aa).

The disordered stretch occupies residues 1 to 24 (MRPDTSRDPVAGPDSGPEPPFPIR). Threonine 44 and asparagine 46 together coordinate Mg(2+). Glutamate 104 (nucleophile) is an active-site residue.

This sequence belongs to the flavokinase family. Zn(2+) is required as a cofactor. The cofactor is Mg(2+).

The catalysed reaction is riboflavin + ATP = FMN + ADP + H(+). It functions in the pathway cofactor biosynthesis; FMN biosynthesis; FMN from riboflavin (ATP route): step 1/1. Its function is as follows. Catalyzes the phosphorylation of riboflavin (vitamin B2) to form flavin mononucleotide (FMN) coenzyme. This Aspergillus terreus (strain NIH 2624 / FGSC A1156) protein is Riboflavin kinase (fmn1).